We begin with the raw amino-acid sequence, 319 residues long: Cytochrome c biogenesis protein CcsA (319 aa).

Helical transmembrane passes span 9-29, 44-64, 71-91, 143-163, 225-245, 259-273, and 286-306; these read ILTHISFSLVSIGITIFLITL, GVIGTFLCITGLLVTRWAYSG, LYESLLFLSWSFAIIHMFPYL, MVLGYAALLCGSLLSVALLVI, IISLGFIFLTIGILSGAVWAN, TWAFITWTMFAIYLH, and AIVAFLGFIIIWICYFGVNLL.

Belongs to the CcmF/CycK/Ccl1/NrfE/CcsA family. As to quaternary structure, may interact with Ccs1.

It localises to the plastid. The protein localises to the chloroplast thylakoid membrane. Its function is as follows. Required during biogenesis of c-type cytochromes (cytochrome c6 and cytochrome f) at the step of heme attachment. This chain is Cytochrome c biogenesis protein CcsA, found in Oenothera parviflora (Small-flowered evening primrose).